The sequence spans 825 residues: Hypoxia-inducible factor 1-alpha (825 aa).

The disordered stretch occupies residues 1–30 (MEGAGGENEKKKMSSERRKEKSRDAARSRR). The segment at 1-401 (MEGAGGENEK…KEPDALTLLA (401 aa)) is interaction with TSGA10. Positions 7–30 (ENEKKKMSSERRKEKSRDAARSRR) are enriched in basic and acidic residues. A bHLH domain is found at 17-70 (RRKEKSRDAARSRRSKESEVFYELAHQLPLPHNVSSHLDKASVMRLTISYLRVR). The interval 21 to 30 (KSRDAARSRR) is DNA-binding. The PAS 1 domain occupies 85-158 (KAQMNCFYLK…THRNGPVRKG (74 aa)). Positions 170–191 (RMKCTLTSRGRTMNIKSATWKV) are required for heterodimer formation with ARNT. One can recognise a PAS 2 domain in the interval 228–298 (PHPSNIEIPL…KTHHDMFTKG (71 aa)). Ser247 carries the phosphoserine; by CK1 modification. The region spanning 302–345 (TGQYRMLAKRGGYVWVETQATVIYNTKDSQPQCIVCVNYVVSGI) is the PAC domain. Positions 401-602 (APAAGDTIIS…STVTGFQQTQ (202 aa)) are ODD. A 4-hydroxyproline modification is found at Pro402. Residues 492–516 (QIQDQPASPSDGSTRQSSPEPNSPS) are compositionally biased toward polar residues. Positions 492 to 520 (QIQDQPASPSDGSTRQSSPEPNSPSEYCF) are disordered. An NTAD region spans residues 530–574 (FKLELVEKLFAEDTEAKNPFSAQDTDLDLEMLAPYIPMDDDFQLR). Lys531 carries the N6-acetyllysine; alternate modification. Lys531 is covalently cross-linked (Glycyl lysine isopeptide (Lys-Gly) (interchain with G-Cter in ubiquitin); alternate). Residues Lys537 and Lys546 each participate in a glycyl lysine isopeptide (Lys-Gly) (interchain with G-Cter in ubiquitin) cross-link. Ser550 is subject to Phosphoserine; by GSK3-beta. Thr554 carries the phosphothreonine; by GSK3-beta modification. Pro563 bears the 4-hydroxyproline mark. Ser575 is modified (phosphoserine; by PLK3). Residues 575 to 784 (SFDQLSPLES…SDLACRLLGQ (210 aa)) form an ID region. 2 disordered regions span residues 579–602 (LSPL…QQTQ) and 654–674 (AKAS…RAGK). Position 588 is a phosphoserine; by GSK3-beta (Ser588). Polar residues predominate over residues 654-667 (AKASAYSGTHSRTA). Ser657 is modified (phosphoserine; by PLK3). Positions 717-721 (RKRKM) match the Nuclear localization signal motif. Residues 785 to 825 (SMDESGLPQLTSYDCEVNAPIQGSRNLLQGEELLRALDQVN) are CTAD. An S-nitrosocysteine modification is found at Cys799. The residue at position 802 (Asn802) is a (3S)-3-hydroxyasparagine.

As to quaternary structure, interacts with the ARNT; forms a heterodimer that binds core DNA sequence 5'-TACGTG-3' within the hypoxia response element (HRE) of target gene promoters. Interacts with COPS5; the interaction increases the transcriptional activity of HIF1A through increased stability. Interacts with EP300 (via TAZ-type 1 domains); the interaction is stimulated in response to hypoxia and inhibited by CITED2. Interacts with CREBBP (via TAZ-type 1 domains). Interacts with NCOA1, NCOA2, APEX1 and HSP90. Interacts (hydroxylated within the ODD domain) with VHLL (via beta domain); the interaction, leads to polyubiquitination and subsequent HIF1A proteasomal degradation. During hypoxia, sumoylated HIF1A also binds VHL; the interaction promotes the ubiquitination of HIF1A. Interacts with SENP1; the interaction desumoylates HIF1A resulting in stabilization and activation of transcription. Interacts (via the ODD domain) with NAA10; the interaction appears not to acetylate HIF1A nor have any affect on protein stability, during hypoxia. Interacts with RWDD3; the interaction enhances HIF1A sumoylation. Interacts with TSGA10. Interacts with HIF3A. Interacts with RORA (via the DNA binding domain); the interaction enhances HIF1A transcription under hypoxia through increasing protein stability. Interaction with PSMA7 inhibits the transactivation activity of HIF1A under both normoxic and hypoxia-mimicking conditions. Interacts with USP20. Interacts with RACK1; promotes HIF1A ubiquitination and proteasome-mediated degradation. Interacts (via N-terminus) with USP19. Interacts with SIRT2. Interacts (deacetylated form) with EGLN1. Interacts with CBFA2T3. Interacts with HSP90AA1 and HSP90AB1. Interacts with DCUN1D1; this interaction increases the interaction between VHL and DCUN1D1. Interacts with HIF1AN. Post-translationally, S-nitrosylation of Cys-799 may be responsible for increased recruitment of p300 coactivator necessary for transcriptional activity of HIF-1 complex. In terms of processing, acetylation of Lys-531 by ARD1 increases interaction with VHL and stimulates subsequent proteasomal degradation. Deacetylated by SIRT2 increases its interaction with and hydroxylation by EGLN1 thereby inactivating HIF1A activity by inducing its proteasomal degradation. Ubiquitinated; in normoxia, following hydroxylation and interaction with VHL. Lys-531 appears to be the principal site of ubiquitination. Clioquinol, the Cu/Zn-chelator, inhibits ubiquitination through preventing hydroxylation at Asn-802. Ubiquitinated by E3 ligase VHL. Deubiquitinated by UCHL1. Post-translationally, requires phosphorylation for DNA-binding. Phosphorylation at Ser-247 by CSNK1D/CK1 represses kinase activity and impairs ARNT binding. Phosphorylation by GSK3-beta and PLK3 promote degradation by the proteasome. In terms of processing, the iron and 2-oxoglutarate dependent 3-hydroxylation of asparagine is (S) stereospecific within HIF CTAD domains. Sumoylated; with SUMO1 under hypoxia. Sumoylation is enhanced through interaction with RWDD3. Both sumoylation and desumoylation seem to be involved in the regulation of its stability during hypoxia. Sumoylation can promote either its stabilization or its VHL-dependent degradation by promoting hydroxyproline-independent HIF1A-VHL complex binding, thus leading to HIF1A ubiquitination and proteasomal degradation. Desumoylation by SENP1 increases its stability amd transcriptional activity. There is a disaccord between various publications on the effect of sumoylation and desumoylation on its stability and transcriptional activity. Post-translationally, in normoxia, is hydroxylated on Pro-402 and Pro-563 in the oxygen-dependent degradation domain (ODD) by EGLN1/PHD2 and EGLN2/PHD1. EGLN3/PHD3 has also been shown to hydroxylate Pro-563. The hydroxylated prolines promote interaction with VHL, initiating rapid ubiquitination and subsequent proteasomal degradation. Deubiquitinated by USP20. Under hypoxia, proline hydroxylation is impaired and ubiquitination is attenuated, resulting in stabilization. In normoxia, is hydroxylated on Asn-802 by HIF1AN, thus abrogating interaction with CREBBP and EP300 and preventing transcriptional activation. Repressed by iron ion, via Fe(2+) prolyl hydroxylase (PHD) enzymes-mediated hydroxylation and subsequent proteasomal degradation. In terms of tissue distribution, expressed in the kidney, higher expression is seen in the renal medulla than in the cortex. Expressed also in the perivenous zone of the liver.

It localises to the cytoplasm. Its subcellular location is the nucleus. It is found in the nucleus speckle. Its activity is regulated as follows. Induced by reactive oxygen species (ROS). Functions as a master transcriptional regulator of the adaptive response to hypoxia. Under hypoxic conditions, activates the transcription of over 40 genes, including erythropoietin, glucose transporters, glycolytic enzymes, vascular endothelial growth factor, HILPDA, and other genes whose protein products increase oxygen delivery or facilitate metabolic adaptation to hypoxia. Plays an essential role in embryonic vascularization, tumor angiogenesis and pathophysiology of ischemic disease. Heterodimerizes with ARNT; heterodimer binds to core DNA sequence 5'-TACGTG-3' within the hypoxia response element (HRE) of target gene promoters. Activation requires recruitment of transcriptional coactivators such as CREBBP and EP300. Activity is enhanced by interaction with NCOA1 and/or NCOA2. Interaction with redox regulatory protein APEX1 seems to activate CTAD and potentiates activation by NCOA1 and CREBBP. Involved in the axonal distribution and transport of mitochondria in neurons during hypoxia. This is Hypoxia-inducible factor 1-alpha (Hif1a) from Rattus norvegicus (Rat).